A 611-amino-acid polypeptide reads, in one-letter code: Podocan (611 aa).

The signal sequence occupies residues 1 to 23 (MAGSRGLPLLLLVLQLFLGPVLP). The region spanning 60–97 (PEPGPATVDCPRDCACSQEGVVDCGGIDLREFPGDLPE) is the LRRNT domain. LRR repeat units lie at residues 98–119 (HTNH…ELSR), 122–145 (RLET…AFEH), 148–169 (SLNY…LPNA), 170–190 (LISV…TFGQ), and 193–213 (NLRS…PDHM). A glycan (N-linked (GlcNAc...) asparagine) is linked at Asn215. 15 LRR repeats span residues 219–239 (NVEI…HLPP), 240–261 (ALYK…AFSE), 264–284 (NLRE…DNET), 290–311 (SLEY…LPRS), 312–332 (LVLL…VLTP), 335–358 (NLEY…AFQG), 361–382 (KLHT…LPRR), 383–403 (VRTL…DFAT), 406–427 (FLEE…RDAF), 432–453 (LLRS…LPKN), 477–490 (QLRE…RLRS), 503–523 (GLQL…GLPP), 524–545 (SLEY…AFDS), 548–569 (NLKG…ESAF), and 574–583 (HLQVLDIEGN). N-linked (GlcNAc...) asparagine glycosylation is present at Asn282. A glycan (N-linked (GlcNAc...) asparagine) is linked at Asn411. A disordered region spans residues 585–611 (EFGNGSKDKDEEEEEEEEEEDEEEETR). Residues 594–611 (DEEEEEEEEEEDEEEETR) are compositionally biased toward acidic residues.

This sequence belongs to the small leucine-rich proteoglycan (SLRP) family. SLRP class V subfamily. As to quaternary structure, binds to type I collagen. In terms of processing, N-glycosylated. Kidney. Expressed in podocytes and likely vascular endothelial cells within the glomerulus.

It is found in the secreted. The protein localises to the extracellular space. The protein resides in the extracellular matrix. Its function is as follows. Negatively regulates cell proliferation and cell migration, especially in smooth muscle cells. The chain is Podocan (Podn) from Mus musculus (Mouse).